A 226-amino-acid chain; its full sequence is MSVRLDARASRHYYDSTFERHAVKILPNEYFVTKGEDLMLSTVLGSCVAACLRDPLTGIGGMNHFMLPDGDAQSPASATMRYGAFAMEVLINELLKAGAARDRLEAKVFGGGAVLSAMQQMNIGERNGQFVLSYLKTENIPVRAQDLGDTHARRIHYFPFDGRVLVRKMAPHHAKAEEVIAHREKLAAQKAQDNSRSAPRIERFDAPKMKVEMFKRPLRRTANAES.

This sequence belongs to the CheD family.

The enzyme catalyses L-glutaminyl-[protein] + H2O = L-glutamyl-[protein] + NH4(+). In terms of biological role, probably deamidates glutamine residues to glutamate on methyl-accepting chemotaxis receptors (MCPs), playing an important role in chemotaxis. This is Probable chemoreceptor glutamine deamidase CheD from Bordetella avium (strain 197N).